The sequence spans 91 residues: Large ribosomal subunit protein eL43 (91 aa).

The C4-type zinc-finger motif lies at 39–60 (CPFCGKDAMRRGAVGIWNCSKC).

This sequence belongs to the eukaryotic ribosomal protein eL43 family.

The chain is Large ribosomal subunit protein eL43 (rpl-37a) from Ostertagia ostertagi (Brown stomach worm).